The chain runs to 93 residues: DNA-binding protein HB1 (93 aa).

This sequence belongs to the bacterial histone-like protein family. In terms of assembly, homodimer.

Functionally, histone-like DNA-binding protein which is capable of wrapping DNA to stabilize it, and thus to prevent its denaturation under extreme environmental conditions. This is DNA-binding protein HB1 (hup) from Bifidobacterium longum (strain NCC 2705).